A 359-amino-acid chain; its full sequence is Agropine synthesis conjugase (359 aa).

Residues 28–171 (TVAKFGRATA…IGGILNEREN (144 aa)) enclose the SIS domain.

This is Agropine synthesis conjugase (mas2) from Rhizobium rhizogenes (Agrobacterium rhizogenes).